Here is a 426-residue protein sequence, read N- to C-terminus: Serine--tRNA ligase (426 aa).

The tract at residues arginine 37 to alanine 63 is disordered. Threonine 233–glutamate 235 is a binding site for L-serine. Arginine 264–glutamate 266 is a binding site for ATP. Position 287 (glutamate 287) interacts with L-serine. Glutamate 351–serine 354 contacts ATP. Serine 387 contacts L-serine.

It belongs to the class-II aminoacyl-tRNA synthetase family. Type-1 seryl-tRNA synthetase subfamily. Homodimer. The tRNA molecule binds across the dimer.

The protein resides in the cytoplasm. It catalyses the reaction tRNA(Ser) + L-serine + ATP = L-seryl-tRNA(Ser) + AMP + diphosphate + H(+). The enzyme catalyses tRNA(Sec) + L-serine + ATP = L-seryl-tRNA(Sec) + AMP + diphosphate + H(+). Its pathway is aminoacyl-tRNA biosynthesis; selenocysteinyl-tRNA(Sec) biosynthesis; L-seryl-tRNA(Sec) from L-serine and tRNA(Sec): step 1/1. Catalyzes the attachment of serine to tRNA(Ser). Is also able to aminoacylate tRNA(Sec) with serine, to form the misacylated tRNA L-seryl-tRNA(Sec), which will be further converted into selenocysteinyl-tRNA(Sec). This chain is Serine--tRNA ligase, found in Pseudomonas entomophila (strain L48).